Reading from the N-terminus, the 441-residue chain is Baicalein 7-O-glucuronosyltransferase (441 aa).

It belongs to the UDP-glycosyltransferase family. In terms of assembly, homodimer.

The catalysed reaction is baicalein + UDP-alpha-D-glucuronate = baicalin + UDP. Its activity is regulated as follows. Inhibited by copper, zinc and iron, p-Chloromercuri-benzoic acid (PCMBA) and 4,4'-diisothiocyanostilbene-2,2'-disulfonic acid (DIDS), but not by N-ethylmaleimide (NEM), dithioerythritol (DTE), calcium or magnesium. In terms of biological role, involved in the production of glucuronosylated baicalein, a flavonoid that shows antiallergic, anti-HIV and antitumor activities. Can use baicalein, scutellarein and wogonin as substrates, but not chrysin, apigenin, luteolin, quercetin, formononetin and daidzein. Highly specific for UDP-glucuronate (UDP-GlcUA) and no activity with UDP-glucose or UDP-galacturonic acid. The protein is Baicalein 7-O-glucuronosyltransferase (UBGAT-I) of Scutellaria baicalensis (Baical skullcap).